The primary structure comprises 507 residues: Germ cell nuclear acidic protein (507 aa).

Low complexity predominate over residues 1–51 (MDSGSSSSSSSSGSSSGSCSTSGSGSTSGSSTTSSSSSSSSSSSSSSSSSS). A disordered region spans residues 1–507 (MDSGSSSSSS…GRGRGAKAGK (507 aa)). Short sequence motifs (SUMO interaction motif 1 (SIM)) lie at residues 12 to 15 (SGSS), 66 to 69 (CVVI), 86 to 89 (VCEI), and 108 to 111 (LIVI). Composition is skewed to basic and acidic residues over residues 122–141 (KNTK…KEGV), 179–354 (SEAK…KGEM), and 431–449 (PQDR…RGDS). Over residues 480–507 (GRGRGRGRGRGRGRGRGRGRGRGAKAGK) the composition is skewed to basic residues.

Belongs to the serine-aspartate repeat-containing protein (SDr) family. Interacts (via SIM domains) with SUMO2; this interaction allows the GCNA recruitment to DPCs sites. Interacts with TOP2A; this interaction allows the resolution of topoisomerase II (TOP2A) DNA-protein cross-links. As to expression, germ-cells specific.

The protein resides in the chromosome. The protein localises to the nucleus. Its subcellular location is the PML body. Its function is as follows. May play a role in DNA-protein cross-links (DPCs) clearance through a SUMO-dependent recruitment to sites of DPCs, ensuring the genomic stability by protecting germ cells and early embryos from various sources of damage. Can resolve the topoisomerase II (TOP2A) DPCs. The sequence is that of Germ cell nuclear acidic protein from Mus musculus (Mouse).